Reading from the N-terminus, the 408-residue chain is Succinylornithine transaminase (408 aa).

N6-(pyridoxal phosphate)lysine is present on lysine 252.

The protein belongs to the class-III pyridoxal-phosphate-dependent aminotransferase family. AstC subfamily. Pyridoxal 5'-phosphate is required as a cofactor.

It carries out the reaction N(2)-succinyl-L-ornithine + 2-oxoglutarate = N-succinyl-L-glutamate 5-semialdehyde + L-glutamate. Its pathway is amino-acid degradation; L-arginine degradation via AST pathway; L-glutamate and succinate from L-arginine: step 3/5. Its function is as follows. Catalyzes the transamination of N(2)-succinylornithine and alpha-ketoglutarate into N(2)-succinylglutamate semialdehyde and glutamate. Can also act as an acetylornithine aminotransferase. The polypeptide is Succinylornithine transaminase (Salmonella heidelberg (strain SL476)).